Reading from the N-terminus, the 147-residue chain is Hemoglobin subunit gamma-2 (147 aa).

A Globin domain is found at 3–147 (HFTEEDKATI…VASALSSRYH (145 aa)). Threonine 13 carries the phosphothreonine modification. 3 positions are modified to phosphoserine: serine 45, serine 51, and serine 53. At lysine 60 the chain carries N6-acetyllysine. Residue histidine 64 coordinates heme b. Residue lysine 83 is modified to N6-acetyllysine. Histidine 93 contacts heme b. The residue at position 94 (cysteine 94) is an S-nitrosocysteine. Residues serine 140, serine 143, and serine 144 each carry the phosphoserine modification.

This sequence belongs to the globin family. As to quaternary structure, heterotetramer of two alpha chains and two gamma chains in fetal hemoglobin (Hb F). Red blood cells.

Its function is as follows. Gamma chains make up the fetal hemoglobin F, in combination with alpha chains. This chain is Hemoglobin subunit gamma-2 (HBG2), found in Gorilla gorilla gorilla (Western lowland gorilla).